A 194-amino-acid chain; its full sequence is MSKDRRAPHVSSDHPVSGVAGRYATALFELADAEGALDAVAGDLERISAMLNESSDLVRLVRSPIFSAEDQTKAFGAVLEKAGISGLVKNFIGLVIRNRRLFGLSDMIGAYTTLLARKRGEMTADVVSAHPLQAAQVESLKAALKSATGRDVRINTKVDASLLGGLIVTVGSRMVDSSLRTKLNSLKIAMKEAS.

It belongs to the ATPase delta chain family. F-type ATPases have 2 components, F(1) - the catalytic core - and F(0) - the membrane proton channel. F(1) has five subunits: alpha(3), beta(3), gamma(1), delta(1), epsilon(1). F(0) has three main subunits: a(1), b(2) and c(10-14). The alpha and beta chains form an alternating ring which encloses part of the gamma chain. F(1) is attached to F(0) by a central stalk formed by the gamma and epsilon chains, while a peripheral stalk is formed by the delta and b chains.

Its subcellular location is the cell inner membrane. F(1)F(0) ATP synthase produces ATP from ADP in the presence of a proton or sodium gradient. F-type ATPases consist of two structural domains, F(1) containing the extramembraneous catalytic core and F(0) containing the membrane proton channel, linked together by a central stalk and a peripheral stalk. During catalysis, ATP synthesis in the catalytic domain of F(1) is coupled via a rotary mechanism of the central stalk subunits to proton translocation. In terms of biological role, this protein is part of the stalk that links CF(0) to CF(1). It either transmits conformational changes from CF(0) to CF(1) or is implicated in proton conduction. The chain is ATP synthase subunit delta from Parvibaculum lavamentivorans (strain DS-1 / DSM 13023 / NCIMB 13966).